Reading from the N-terminus, the 280-residue chain is Energy-coupling factor transporter ATP-binding protein EcfA1 (280 aa).

Residues 7 to 241 (IEVAHLKYEY…GQRLLDLGLD (235 aa)) form the ABC transporter domain. Position 41 to 48 (41 to 48 (GHNGSGKS)) interacts with ATP.

Belongs to the ABC transporter superfamily. Energy-coupling factor EcfA family. In terms of assembly, forms a stable energy-coupling factor (ECF) transporter complex composed of 2 membrane-embedded substrate-binding proteins (S component), 2 ATP-binding proteins (A component) and 2 transmembrane proteins (T component).

It localises to the cell membrane. Its function is as follows. ATP-binding (A) component of a common energy-coupling factor (ECF) ABC-transporter complex. Unlike classic ABC transporters this ECF transporter provides the energy necessary to transport a number of different substrates. The polypeptide is Energy-coupling factor transporter ATP-binding protein EcfA1 (Latilactobacillus sakei subsp. sakei (strain 23K) (Lactobacillus sakei subsp. sakei)).